The chain runs to 367 residues: NADH-quinone oxidoreductase subunit H (367 aa).

A run of 8 helical transmembrane segments spans residues 19–39 (ALFI…AYLV), 87–107 (ICFL…WAVI), 132–152 (IGVL…IIAG), 178–198 (IGLT…GEIV), 204–224 (MPYW…ISAL), 266–286 (ILIN…PLNI), 291–311 (IIPG…CFIW), and 328–348 (GWKV…SILV).

This sequence belongs to the complex I subunit 1 family. As to quaternary structure, NDH-1 is composed of 14 different subunits. Subunits NuoA, H, J, K, L, M, N constitute the membrane sector of the complex.

The protein localises to the cell inner membrane. It catalyses the reaction a quinone + NADH + 5 H(+)(in) = a quinol + NAD(+) + 4 H(+)(out). Its function is as follows. NDH-1 shuttles electrons from NADH, via FMN and iron-sulfur (Fe-S) centers, to quinones in the respiratory chain. The immediate electron acceptor for the enzyme in this species is believed to be ubiquinone. Couples the redox reaction to proton translocation (for every two electrons transferred, four hydrogen ions are translocated across the cytoplasmic membrane), and thus conserves the redox energy in a proton gradient. This subunit may bind ubiquinone. The chain is NADH-quinone oxidoreductase subunit H from Ehrlichia chaffeensis (strain ATCC CRL-10679 / Arkansas).